Here is a 414-residue protein sequence, read N- to C-terminus: Succinylornithine transaminase (414 aa).

An N6-(pyridoxal phosphate)lysine modification is found at lysine 260.

This sequence belongs to the class-III pyridoxal-phosphate-dependent aminotransferase family. AstC subfamily. Pyridoxal 5'-phosphate is required as a cofactor.

It catalyses the reaction N(2)-succinyl-L-ornithine + 2-oxoglutarate = N-succinyl-L-glutamate 5-semialdehyde + L-glutamate. The protein operates within amino-acid degradation; L-arginine degradation via AST pathway; L-glutamate and succinate from L-arginine: step 3/5. Its function is as follows. Catalyzes the transamination of N(2)-succinylornithine and alpha-ketoglutarate into N(2)-succinylglutamate semialdehyde and glutamate. Can also act as an acetylornithine aminotransferase. The sequence is that of Succinylornithine transaminase from Yersinia pseudotuberculosis serotype O:1b (strain IP 31758).